A 381-amino-acid chain; its full sequence is Erythronate-4-phosphate dehydrogenase (381 aa).

2 residues coordinate substrate: Ser45 and Thr67. NAD(+) contacts are provided by residues 127–128 (QV), Asp147, and Thr176. Arg209 is an active-site residue. Asp233 contacts NAD(+). Glu238 is an active-site residue. His255 (proton donor) is an active-site residue. Gly258 provides a ligand contact to NAD(+). Residue Tyr259 coordinates substrate.

The protein belongs to the D-isomer specific 2-hydroxyacid dehydrogenase family. PdxB subfamily. Homodimer.

The protein resides in the cytoplasm. It carries out the reaction 4-phospho-D-erythronate + NAD(+) = (R)-3-hydroxy-2-oxo-4-phosphooxybutanoate + NADH + H(+). It participates in cofactor biosynthesis; pyridoxine 5'-phosphate biosynthesis; pyridoxine 5'-phosphate from D-erythrose 4-phosphate: step 2/5. Functionally, catalyzes the oxidation of erythronate-4-phosphate to 3-hydroxy-2-oxo-4-phosphonooxybutanoate. The chain is Erythronate-4-phosphate dehydrogenase from Vibrio cholerae serotype O1 (strain ATCC 39315 / El Tor Inaba N16961).